We begin with the raw amino-acid sequence, 145 residues long: Ribonuclease H (145 aa).

Residues 1–142 form the RNase H type-1 domain; that stretch reads MDTPVYLYTD…ADDLANRGAA (142 aa). The Mg(2+) site is built by D10, E48, D70, and D134.

It belongs to the RNase H family. In terms of assembly, monomer. Mg(2+) is required as a cofactor.

It is found in the cytoplasm. The enzyme catalyses Endonucleolytic cleavage to 5'-phosphomonoester.. In terms of biological role, endonuclease that specifically degrades the RNA of RNA-DNA hybrids. The polypeptide is Ribonuclease H (Neisseria gonorrhoeae (strain ATCC 700825 / FA 1090)).